Consider the following 542-residue polypeptide: CTP synthase (542 aa).

Residues 1-265 (MTRYIFVTGG…DQLVIERFGL (265 aa)) are amidoligase domain. Serine 13 lines the CTP pocket. Serine 13 contacts UTP. Residues 14–19 (SLGKGI) and aspartate 71 contribute to the ATP site. 2 residues coordinate Mg(2+): aspartate 71 and glutamate 139. CTP-binding positions include 146 to 148 (DIE), 186 to 191 (KTKPTQ), and lysine 222. Residues 186–191 (KTKPTQ) and lysine 222 each bind UTP. Positions 290–541 (TIAMVGKYME…VEAALANKKG (252 aa)) constitute a Glutamine amidotransferase type-1 domain. Residue glycine 351 coordinates L-glutamine. Residue cysteine 378 is the Nucleophile; for glutamine hydrolysis of the active site. Residues 379–382 (LGMQ), glutamate 402, and arginine 469 each bind L-glutamine. Catalysis depends on residues histidine 514 and glutamate 516.

Belongs to the CTP synthase family. Homotetramer.

The enzyme catalyses UTP + L-glutamine + ATP + H2O = CTP + L-glutamate + ADP + phosphate + 2 H(+). It carries out the reaction L-glutamine + H2O = L-glutamate + NH4(+). It catalyses the reaction UTP + NH4(+) + ATP = CTP + ADP + phosphate + 2 H(+). It functions in the pathway pyrimidine metabolism; CTP biosynthesis via de novo pathway; CTP from UDP: step 2/2. Allosterically activated by GTP, when glutamine is the substrate; GTP has no effect on the reaction when ammonia is the substrate. The allosteric effector GTP functions by stabilizing the protein conformation that binds the tetrahedral intermediate(s) formed during glutamine hydrolysis. Inhibited by the product CTP, via allosteric rather than competitive inhibition. Its function is as follows. Catalyzes the ATP-dependent amination of UTP to CTP with either L-glutamine or ammonia as the source of nitrogen. Regulates intracellular CTP levels through interactions with the four ribonucleotide triphosphates. The chain is CTP synthase from Marinobacter nauticus (strain ATCC 700491 / DSM 11845 / VT8) (Marinobacter aquaeolei).